Here is a 592-residue protein sequence, read N- to C-terminus: Frizzled-5 (592 aa).

The signal sequence occupies residues M1–S38. The Extracellular segment spans residues A39 to W248. Positions S40–R161 constitute an FZ domain. Intrachain disulfides connect C45-C106, C53-C99, C90-C128, C117-C158, and C121-C145. Residues N162–P192 are disordered. A helical transmembrane segment spans residues I249–I269. The Cytoplasmic segment spans residues D270–P280. The helical transmembrane segment at I281–A301 threads the bilayer. Topologically, residues G302–C327 are extracellular. A helical membrane pass occupies residues T328–L348. Residues S349–Q370 lie on the Cytoplasmic side of the membrane. Residues Y371 to S391 traverse the membrane as a helical segment. The Extracellular segment spans residues S392–G414. Residues F415–F435 traverse the membrane as a helical segment. The Cytoplasmic segment spans residues V436–R461. A helical membrane pass occupies residues I462–Y482. Topologically, residues E483–A512 are extracellular. The helical transmembrane segment at V513–W533 threads the bilayer. The Cytoplasmic portion of the chain corresponds to S534–V592.

This sequence belongs to the G-protein coupled receptor Fz/Smo family.

It localises to the cell membrane. The protein resides in the golgi apparatus membrane. It is found in the synapse. The protein localises to the perikaryon. Its subcellular location is the cell projection. It localises to the dendrite. The protein resides in the axon. Its function is as follows. Receptor for Wnt proteins. Following binding, activates the canonical Wnt/beta-catenin signaling pathway. Also activates wnt non-canonical signaling. In neurons, activation of the Wnt pathway promotes formation of synapses. May be involved in transduction and intercellular transmission of polarity information during tissue morphogenesis and/or in differentiated tissues. Plays a role in early eye development, possibly through wnt non-canonical signaling. As a receptor for wnt11, promotes eye formation, at least partially, by antagonizing the Wnt/beta-catenin pathway. In addition, promotes coherence of eye field cells, potentially contributing to the coordinated morphogenetic behaviors of cells in the nascent eye field. This chain is Frizzled-5 (fzd5), found in Danio rerio (Zebrafish).